The primary structure comprises 354 residues: Holliday junction branch migration complex subunit RuvB (354 aa).

The large ATPase domain (RuvB-L) stretch occupies residues 4-191; it reads TDKLAAPARV…FGIVARLEFY (188 aa). ATP is bound by residues Leu30, Arg31, Gly72, Lys75, Thr76, Thr77, 138–140, Arg181, Tyr191, and Arg228; that span reads EDY. Mg(2+) is bound at residue Thr76. Residues 192 to 262 form a small ATPAse domain (RuvB-S) region; it reads TAEELARIVT…MADAALAMLD (71 aa). Residues 265–354 form a head domain (RuvB-H) region; that stretch reads RVGFDLMDRK…GDAGELFGDA (90 aa). Arg301, Arg320, and Arg325 together coordinate DNA.

This sequence belongs to the RuvB family. Homohexamer. Forms an RuvA(8)-RuvB(12)-Holliday junction (HJ) complex. HJ DNA is sandwiched between 2 RuvA tetramers; dsDNA enters through RuvA and exits via RuvB. An RuvB hexamer assembles on each DNA strand where it exits the tetramer. Each RuvB hexamer is contacted by two RuvA subunits (via domain III) on 2 adjacent RuvB subunits; this complex drives branch migration. In the full resolvosome a probable DNA-RuvA(4)-RuvB(12)-RuvC(2) complex forms which resolves the HJ.

It localises to the cytoplasm. The enzyme catalyses ATP + H2O = ADP + phosphate + H(+). In terms of biological role, the RuvA-RuvB-RuvC complex processes Holliday junction (HJ) DNA during genetic recombination and DNA repair, while the RuvA-RuvB complex plays an important role in the rescue of blocked DNA replication forks via replication fork reversal (RFR). RuvA specifically binds to HJ cruciform DNA, conferring on it an open structure. The RuvB hexamer acts as an ATP-dependent pump, pulling dsDNA into and through the RuvAB complex. RuvB forms 2 homohexamers on either side of HJ DNA bound by 1 or 2 RuvA tetramers; 4 subunits per hexamer contact DNA at a time. Coordinated motions by a converter formed by DNA-disengaged RuvB subunits stimulates ATP hydrolysis and nucleotide exchange. Immobilization of the converter enables RuvB to convert the ATP-contained energy into a lever motion, pulling 2 nucleotides of DNA out of the RuvA tetramer per ATP hydrolyzed, thus driving DNA branch migration. The RuvB motors rotate together with the DNA substrate, which together with the progressing nucleotide cycle form the mechanistic basis for DNA recombination by continuous HJ branch migration. Branch migration allows RuvC to scan DNA until it finds its consensus sequence, where it cleaves and resolves cruciform DNA. In Cupriavidus taiwanensis (strain DSM 17343 / BCRC 17206 / CCUG 44338 / CIP 107171 / LMG 19424 / R1) (Ralstonia taiwanensis (strain LMG 19424)), this protein is Holliday junction branch migration complex subunit RuvB.